A 416-amino-acid chain; its full sequence is Probable histone-binding protein lin-53 (416 aa).

WD repeat units follow at residues 118–158 (NHEG…SVPK), 170–210 (GHTK…GANG), 220–260 (GHES…PGHA), 263–303 (AHSA…LKLH), 307–347 (SHRD…EDQT), and 364–404 (GHTA…YNDV).

The protein belongs to the WD repeat RBAP46/RBAP48/MSI1 family. Binds directly to helix 1 of the histone fold of histone H4, a region that is not accessible when H4 is in chromatin. Probable component of a NuRD-like complex, composed of at least lin-53 and hda-1. Interacts with lin-35. Interacts with hda-1; the interaction is direct. Component of the DRM complex, at least composed of lin-9, lin-35, lin-37, lin-52, lin-53, lin-54- dpl-1 and efl-1. Interacts with hcp-3.

It localises to the nucleus. Its subcellular location is the chromosome. It is found in the centromere. Functionally, core histone-binding subunit that may target chromatin assembly factors, chromatin remodeling factors and histone deacetylases to their histone substrates in a manner that is regulated by nucleosomal DNA. Required for hcp-3 and his-1 stabilization, localization of hcp-3 to centromeres and for proper chromosome segregation. Synthetic multivulva class B (synMuvB) protein. SynMuvB proteins are required to repress the induction of vulval development by Ras signaling and probably act by forming the multiprotein DRM complex that represses transcription. This chain is Probable histone-binding protein lin-53, found in Caenorhabditis briggsae.